The chain runs to 137 residues: Small ribosomal subunit protein uS13 (137 aa).

The segment at 114-137 is disordered; it reads VTQKNARTRKGPRKTIMAKKDKGK. The segment covering 119 to 130 has biased composition (basic residues); the sequence is ARTRKGPRKTIM.

The protein belongs to the universal ribosomal protein uS13 family. In terms of assembly, part of the 30S ribosomal subunit. Forms a loose heterodimer with protein S19. Forms two bridges to the 50S subunit in the 70S ribosome.

Functionally, located at the top of the head of the 30S subunit, it contacts several helices of the 16S rRNA. In the 70S ribosome it contacts the 23S rRNA (bridge B1a) and protein L5 of the 50S subunit (bridge B1b), connecting the 2 subunits; these bridges are implicated in subunit movement. Contacts the tRNAs in the A and P-sites. This is Small ribosomal subunit protein uS13 from Mesomycoplasma hyopneumoniae (strain 232) (Mycoplasma hyopneumoniae).